A 143-amino-acid polypeptide reads, in one-letter code: Transcriptional regulator MraZ (143 aa).

SpoVT-AbrB domains are found at residues 5-47 (EFDH…TLEE) and 76-119 (AVEV…DRET).

It belongs to the MraZ family. Forms oligomers.

It localises to the cytoplasm. The protein localises to the nucleoid. The polypeptide is Transcriptional regulator MraZ (Staphylococcus epidermidis (strain ATCC 35984 / DSM 28319 / BCRC 17069 / CCUG 31568 / BM 3577 / RP62A)).